The primary structure comprises 98 residues: Late cornified envelope-like proline-rich protein 1 (98 aa).

The segment at Met-1–Lys-26 is disordered.

Belongs to the cornifin (SPRR) family.

In Homo sapiens (Human), this protein is Late cornified envelope-like proline-rich protein 1 (LELP1).